The following is a 1478-amino-acid chain: DNA-directed RNA polymerase subunit beta' (1478 aa).

Mg(2+) contacts are provided by Asp535, Asp537, and Asp539. Residues Cys1034, Cys1109, Cys1116, and Cys1119 each contribute to the Zn(2+) site.

The protein belongs to the RNA polymerase beta' chain family. In terms of assembly, the RNAP catalytic core consists of 2 alpha, 1 beta, 1 beta' and 1 omega subunit. When a sigma factor is associated with the core the holoenzyme is formed, which can initiate transcription. The cofactor is Mg(2+). It depends on Zn(2+) as a cofactor.

It carries out the reaction RNA(n) + a ribonucleoside 5'-triphosphate = RNA(n+1) + diphosphate. In terms of biological role, DNA-dependent RNA polymerase catalyzes the transcription of DNA into RNA using the four ribonucleoside triphosphates as substrates. The sequence is that of DNA-directed RNA polymerase subunit beta' from Mycoplasmopsis agalactiae (strain NCTC 10123 / CIP 59.7 / PG2) (Mycoplasma agalactiae).